The following is an 801-amino-acid chain: Transducin beta-like protein 3 (801 aa).

A2 bears the N-acetylalanine mark. WD repeat units follow at residues E64–K105, I107–H146, G149–V190, A193–T232, L245–T284, G290–Q329, G332–L372, G374–C413, G419–S459, C477–V516, G519–E560, H562–D602, and H604–E642. The residue at position 257 (S257) is a Phosphoserine. K407 is covalently cross-linked (Glycyl lysine isopeptide (Lys-Gly) (interchain with G-Cter in SUMO2)).

In terms of assembly, part of the small subunit (SSU) processome, composed of more than 70 proteins and the RNA chaperone small nucleolar RNA (snoRNA) U3.

It is found in the nucleus. Its subcellular location is the nucleolus. Functionally, part of the small subunit (SSU) processome, first precursor of the small eukaryotic ribosomal subunit. During the assembly of the SSU processome in the nucleolus, many ribosome biogenesis factors, an RNA chaperone and ribosomal proteins associate with the nascent pre-rRNA and work in concert to generate RNA folding, modifications, rearrangements and cleavage as well as targeted degradation of pre-ribosomal RNA by the RNA exosome. This is Transducin beta-like protein 3 (Tbl3) from Mus musculus (Mouse).